A 467-amino-acid polypeptide reads, in one-letter code: Ethanolamine ammonia-lyase reactivase EutA (467 aa).

Belongs to the EutA family.

The protein localises to the bacterial microcompartment. It functions in the pathway amine and polyamine degradation; ethanolamine degradation. In terms of biological role, reactivates suicidally inhibited ethanolamine ammonia-lyase (EAL), cyanocobalamin-inactivated EAL and O(2)-inactivated EAL; requires Mg(2+), ATP and adenosylcobalamin. Reactivation probably occurs by the ATP-dependent exchange of cobalamin. Protects EAL from inhibition by CN-B12, does not have adenosylation activity. Its function is as follows. Expression of the eut operon allows this bacteria to use ethanolamine as a carbon, nitrogen and energy source. It relies on cobalamin (vitamin B12) both as a cofactor for the ethanolamine ammonia-lyase (EAL) activity and to induce the operon. EA enhances bacterial survival in macrophages in a concentration-dependent manner, suggesting it is an important nutrient during infection. The sequence is that of Ethanolamine ammonia-lyase reactivase EutA from Salmonella typhimurium (strain LT2 / SGSC1412 / ATCC 700720).